The chain runs to 735 residues: Catalase-peroxidase (735 aa).

Positions 97 to 220 (WHAAGTYRIG…LAAVQMGLIY (124 aa)) form a cross-link, tryptophyl-tyrosyl-methioninium (Trp-Tyr) (with M-246). Residue His-98 is the Proton acceptor of the active site. The segment at residues 220–246 (YVNPEGPNGKPDPMAAAHDIRETFGRM) is a cross-link (tryptophyl-tyrosyl-methioninium (Tyr-Met) (with W-97)). His-261 is a binding site for heme b. Positions 342–362 (AHQWTPKNPEAASTVPDAHDP) are disordered.

Belongs to the peroxidase family. Peroxidase/catalase subfamily. In terms of assembly, homodimer or homotetramer. It depends on heme b as a cofactor. In terms of processing, formation of the three residue Trp-Tyr-Met cross-link is important for the catalase, but not the peroxidase activity of the enzyme.

The enzyme catalyses H2O2 + AH2 = A + 2 H2O. The catalysed reaction is 2 H2O2 = O2 + 2 H2O. In terms of biological role, bifunctional enzyme with both catalase and broad-spectrum peroxidase activity. This chain is Catalase-peroxidase, found in Gloeobacter violaceus (strain ATCC 29082 / PCC 7421).